A 130-amino-acid chain; its full sequence is Keratin-associated protein 12-1 (130 aa).

Tandem repeats lie at residues 10–14 (CQPSC), 15–29 (CVSSSCQPSCCVSSP), 34–38 (CFVSS), 40–44 (CQPSC), 45–49 (CVSSS), 60–64 (CIPVR), 85–89 (CQSSV), 90–94 (CVPVS), 95–99 (CRPVC), 104–108 (CQSSG), 109–113 (CCQPS), 114–118 (CPTLV), 119–123 (CKPVT), and 124–128 (CSNPS). Residues 10 to 128 (CQPSCCVSSS…CKPVTCSNPS (119 aa)) are 14 X 5 AA approximate repeats.

It belongs to the KRTAP type 12 family. In terms of assembly, interacts with hair keratins. In terms of tissue distribution, expressed only in the head and back skin of a 3 day old mouse. Not expressed in adult skin.

Functionally, in the hair cortex, hair keratin intermediate filaments are embedded in an interfilamentous matrix, consisting of hair keratin-associated proteins (KRTAP), which are essential for the formation of a rigid and resistant hair shaft through their extensive disulfide bond cross-linking with abundant cysteine residues of hair keratins. The matrix proteins include the high-sulfur and high-glycine-tyrosine keratins. The sequence is that of Keratin-associated protein 12-1 from Mus musculus (Mouse).